We begin with the raw amino-acid sequence, 249 residues long: Ribitol 2-dehydrogenase (249 aa).

20–43 (TGAASGIGLECARTLLGAGAKVVL) is an NAD(+) binding site. Catalysis depends on tyrosine 160, which acts as the Proton acceptor.

The protein belongs to the short-chain dehydrogenases/reductases (SDR) family. Homotetramer.

The catalysed reaction is ribitol + NAD(+) = D-ribulose + NADH + H(+). The protein is Ribitol 2-dehydrogenase (rbtD) of Klebsiella aerogenes (Enterobacter aerogenes).